We begin with the raw amino-acid sequence, 471 residues long: UDP-N-acetylmuramate--L-alanine ligase (471 aa).

Residue 114 to 120 participates in ATP binding; that stretch reads GTHGKTT.

It belongs to the MurCDEF family.

The protein resides in the cytoplasm. It carries out the reaction UDP-N-acetyl-alpha-D-muramate + L-alanine + ATP = UDP-N-acetyl-alpha-D-muramoyl-L-alanine + ADP + phosphate + H(+). It functions in the pathway cell wall biogenesis; peptidoglycan biosynthesis. Cell wall formation. The polypeptide is UDP-N-acetylmuramate--L-alanine ligase (Chlorobaculum parvum (strain DSM 263 / NCIMB 8327) (Chlorobium vibrioforme subsp. thiosulfatophilum)).